A 479-amino-acid chain; its full sequence is uncharacterized protein (479 aa).

The interval 180–203 is disordered; sequence LGGEHSDSTNTELANPSSTTTRIT. The segment covering 187 to 202 has biased composition (polar residues); that stretch reads STNTELANPSSTTTRI. A PE-PPE domain is found at 240–462; it reads PGTTPEVVSY…LKPLVDAGYS (223 aa).

This sequence belongs to the mycobacterial PPE family.

This is an uncharacterized protein from Mycobacterium tuberculosis (strain CDC 1551 / Oshkosh).